Here is a 195-residue protein sequence, read N- to C-terminus: Interferon omega-1 (195 aa).

A signal peptide spans 1-23; that stretch reads MAFSVSSLMALVVISSSPVSSMS. Cystine bridges form between Cys-24–Cys-122 and Cys-52–Cys-162. Residue Asn-101 is glycosylated (N-linked (GlcNAc...) asparagine).

Belongs to the alpha/beta interferon family.

The protein localises to the secreted. This is Interferon omega-1 from Equus caballus (Horse).